Consider the following 470-residue polypeptide: Glutamate--tRNA ligase (470 aa).

Residues 9–19 (PSPTGFLHVGG) carry the 'HIGH' region motif. Residues 236–240 (KLSKR) carry the 'KMSKS' region motif. Lys239 lines the ATP pocket.

Belongs to the class-I aminoacyl-tRNA synthetase family. Glutamate--tRNA ligase type 1 subfamily. Monomer.

The protein localises to the cytoplasm. The enzyme catalyses tRNA(Glu) + L-glutamate + ATP = L-glutamyl-tRNA(Glu) + AMP + diphosphate. Catalyzes the attachment of glutamate to tRNA(Glu) in a two-step reaction: glutamate is first activated by ATP to form Glu-AMP and then transferred to the acceptor end of tRNA(Glu). The polypeptide is Glutamate--tRNA ligase (Psychromonas ingrahamii (strain DSM 17664 / CCUG 51855 / 37)).